Consider the following 459-residue polypeptide: Palmitoyltransferase PFA4 (459 aa).

The Cytoplasmic segment spans residues 1–9 (MAARNWSRV). Residues 10–30 (WVGGTVILISFIAFSSQIFVI) form a helical membrane-spanning segment. Over 31-37 (WPWYGRE) the chain is Lumenal. The chain crosses the membrane as a helical span at residues 38-58 (ISLDLLKLLVPLNLAAFMIFW). Residues 59–138 (NYRLCVITSP…GNCVGFYNQG (80 aa)) lie on the Cytoplasmic side of the membrane. A DHHC domain is found at 95 to 145 (RYCKNCEHYKPPRAHHCRQCKTCWLKLDHHCPWIGNCVGFYNQGHFIRFLL). Residue cysteine 125 is the S-palmitoyl cysteine intermediate of the active site. A helical membrane pass occupies residues 139-159 (HFIRFLLWVDIGTTFHLIIMV). The Lumenal segment spans residues 160–177 (RRVLYIAEYYHQEPTLAD). Residues 178 to 198 (VLFLVFNFATCVPVWLCVGMF) form a helical membrane-spanning segment. The Cytoplasmic segment spans residues 199 to 459 (SIYHVYLACG…DTEEESGYAH (261 aa)). The tract at residues 278–379 (HTTQYFWPPQ…DYDHYDEGPM (102 aa)) is disordered. A compositionally biased stretch (pro residues) spans 286 to 299 (PQDPSRLPNPPPIP). Residues 310 to 322 (NGFNPNLQPTNSL) are compositionally biased toward polar residues. Positions 331–356 (HIDEDEHSHERDQYRHYSSGEERDND) are enriched in basic and acidic residues.

This sequence belongs to the DHHC palmitoyltransferase family. PFA4 subfamily.

Its subcellular location is the endoplasmic reticulum membrane. The enzyme catalyses L-cysteinyl-[protein] + hexadecanoyl-CoA = S-hexadecanoyl-L-cysteinyl-[protein] + CoA. Its function is as follows. Mediates the reversible addition of palmitate to target proteins, thereby regulating their membrane association and biological function. The sequence is that of Palmitoyltransferase PFA4 from Cryptococcus neoformans var. neoformans serotype D (strain B-3501A) (Filobasidiella neoformans).